A 310-amino-acid polypeptide reads, in one-letter code: Small ribosomal subunit protein uS2 (310 aa).

Disordered regions lie at residues 213–240 (EEQA…GGAA) and 271–310 (WDSV…TDWA). A compositionally biased stretch (low complexity) spans 216–227 (AALARQQEEANA). Residues 297 to 310 (VTMQEQAKPSTDWA) are compositionally biased toward polar residues.

Belongs to the universal ribosomal protein uS2 family. Component of the small ribosomal subunit. Mature ribosomes consist of a small (40S) and a large (60S) subunit. The 40S subunit contains about 33 different proteins and 1 molecule of RNA (18S). The 60S subunit contains about 49 different proteins and 3 molecules of RNA (28S, 5.8S and 5S). Interacts with ribosomal protein S21.

It is found in the cytoplasm. Required for the assembly and/or stability of the 40S ribosomal subunit. Required for the processing of the 20S rRNA-precursor to mature 18S rRNA in a late step of the maturation of 40S ribosomal subunits. The protein is Small ribosomal subunit protein uS2 of Nematostella vectensis (Starlet sea anemone).